The primary structure comprises 543 residues: Chaperonin GroEL (543 aa).

Residues 29-32, 86-90, Gly413, 476-478, and Asp492 contribute to the ATP site; these read TLGP, DGTTT, and NAA.

This sequence belongs to the chaperonin (HSP60) family. Forms a cylinder of 14 subunits composed of two heptameric rings stacked back-to-back. Interacts with the co-chaperonin GroES.

Its subcellular location is the cytoplasm. It carries out the reaction ATP + H2O + a folded polypeptide = ADP + phosphate + an unfolded polypeptide.. Its function is as follows. Together with its co-chaperonin GroES, plays an essential role in assisting protein folding. The GroEL-GroES system forms a nano-cage that allows encapsulation of the non-native substrate proteins and provides a physical environment optimized to promote and accelerate protein folding. This is Chaperonin GroEL from Streptococcus pyogenes serotype M18 (strain MGAS8232).